The following is a 256-amino-acid chain: Tryptophan synthase alpha chain (256 aa).

Catalysis depends on proton acceptor residues glutamate 48 and aspartate 59.

This sequence belongs to the TrpA family. Tetramer of two alpha and two beta chains.

The enzyme catalyses (1S,2R)-1-C-(indol-3-yl)glycerol 3-phosphate + L-serine = D-glyceraldehyde 3-phosphate + L-tryptophan + H2O. Its pathway is amino-acid biosynthesis; L-tryptophan biosynthesis; L-tryptophan from chorismate: step 5/5. The alpha subunit is responsible for the aldol cleavage of indoleglycerol phosphate to indole and glyceraldehyde 3-phosphate. The chain is Tryptophan synthase alpha chain from Caldicellulosiruptor bescii (strain ATCC BAA-1888 / DSM 6725 / KCTC 15123 / Z-1320) (Anaerocellum thermophilum).